The chain runs to 337 residues: D-alanine--D-alanine ligase (337 aa).

Residues 124-330 (KMWFSALGIP…FTEYLSLVIN (207 aa)) form the ATP-grasp domain. Residue 154–209 (ALANWGSIFIKAASQGSSVGCYKVDDSSKVAQVLKDAFGYAPYVVVEKTIKARELE) coordinates ATP. Asp-284, Glu-297, and Asn-299 together coordinate Mg(2+).

Belongs to the D-alanine--D-alanine ligase family. It depends on Mg(2+) as a cofactor. The cofactor is Mn(2+).

The protein resides in the cytoplasm. The catalysed reaction is 2 D-alanine + ATP = D-alanyl-D-alanine + ADP + phosphate + H(+). The protein operates within cell wall biogenesis; peptidoglycan biosynthesis. Its function is as follows. Cell wall formation. The chain is D-alanine--D-alanine ligase from Shewanella sp. (strain W3-18-1).